The sequence spans 295 residues: Transcriptional regulator SirC (295 aa).

An HTH araC/xylS-type domain is found at Glu195 to Thr292. 2 DNA-binding regions (H-T-H motif) span residues Ala212–Glu233 and Ile259–Phe282.

Positive regulator of the expression of the invasion-associated type III secretion system encoded within SPI-1 (pathogenicity island 1). The polypeptide is Transcriptional regulator SirC (sirC) (Salmonella typhimurium (strain SL1344)).